The chain runs to 333 residues: Holliday junction branch migration complex subunit RuvB (333 aa).

Residues methionine 1–tyrosine 182 are large ATPase domain (RuvB-L). Residues leucine 21, arginine 22, glycine 63, lysine 66, threonine 67, threonine 68, glutamate 129–phenylalanine 131, arginine 172, tyrosine 182, and arginine 219 contribute to the ATP site. Threonine 67 provides a ligand contact to Mg(2+). Positions threonine 183–glutamine 253 are small ATPAse domain (RuvB-S). The head domain (RuvB-H) stretch occupies residues lysine 256–valine 333. DNA contacts are provided by arginine 311 and arginine 316.

It belongs to the RuvB family. Homohexamer. Forms an RuvA(8)-RuvB(12)-Holliday junction (HJ) complex. HJ DNA is sandwiched between 2 RuvA tetramers; dsDNA enters through RuvA and exits via RuvB. An RuvB hexamer assembles on each DNA strand where it exits the tetramer. Each RuvB hexamer is contacted by two RuvA subunits (via domain III) on 2 adjacent RuvB subunits; this complex drives branch migration. In the full resolvosome a probable DNA-RuvA(4)-RuvB(12)-RuvC(2) complex forms which resolves the HJ.

Its subcellular location is the cytoplasm. It catalyses the reaction ATP + H2O = ADP + phosphate + H(+). Its function is as follows. The RuvA-RuvB-RuvC complex processes Holliday junction (HJ) DNA during genetic recombination and DNA repair, while the RuvA-RuvB complex plays an important role in the rescue of blocked DNA replication forks via replication fork reversal (RFR). RuvA specifically binds to HJ cruciform DNA, conferring on it an open structure. The RuvB hexamer acts as an ATP-dependent pump, pulling dsDNA into and through the RuvAB complex. RuvB forms 2 homohexamers on either side of HJ DNA bound by 1 or 2 RuvA tetramers; 4 subunits per hexamer contact DNA at a time. Coordinated motions by a converter formed by DNA-disengaged RuvB subunits stimulates ATP hydrolysis and nucleotide exchange. Immobilization of the converter enables RuvB to convert the ATP-contained energy into a lever motion, pulling 2 nucleotides of DNA out of the RuvA tetramer per ATP hydrolyzed, thus driving DNA branch migration. The RuvB motors rotate together with the DNA substrate, which together with the progressing nucleotide cycle form the mechanistic basis for DNA recombination by continuous HJ branch migration. Branch migration allows RuvC to scan DNA until it finds its consensus sequence, where it cleaves and resolves cruciform DNA. This Bacillus cereus (strain B4264) protein is Holliday junction branch migration complex subunit RuvB.